We begin with the raw amino-acid sequence, 495 residues long: ATP synthase subunit beta, chloroplastic (495 aa).

172-179 (GGAGVGKT) contributes to the ATP binding site.

The protein belongs to the ATPase alpha/beta chains family. F-type ATPases have 2 components, CF(1) - the catalytic core - and CF(0) - the membrane proton channel. CF(1) has five subunits: alpha(3), beta(3), gamma(1), delta(1), epsilon(1). CF(0) has four main subunits: a(1), b(1), b'(1) and c(9-12).

The protein localises to the plastid. It is found in the chloroplast thylakoid membrane. It carries out the reaction ATP + H2O + 4 H(+)(in) = ADP + phosphate + 5 H(+)(out). Its function is as follows. Produces ATP from ADP in the presence of a proton gradient across the membrane. The catalytic sites are hosted primarily by the beta subunits. This chain is ATP synthase subunit beta, chloroplastic, found in Scilla siberica (Siberian squill).